The sequence spans 252 residues: Protein BTG3 (252 aa).

Positions 138-163 are disordered; sequence VTSDYHSGSSSSDEDTSKEVDVKPSS.

The protein belongs to the BTG family. Ubiquitous.

In terms of biological role, overexpression impairs serum-induced cell cycle progression from the G0/G1 to S phase. This is Protein BTG3 (Btg3) from Mus musculus (Mouse).